Here is a 528-residue protein sequence, read N- to C-terminus: GMP synthase [glutamine-hydrolyzing] (528 aa).

The Glutamine amidotransferase type-1 domain occupies 13–204 (SILILDFGSQ…VYKISCCAAD (192 aa)). The active-site Nucleophile is cysteine 90. Active-site residues include histidine 178 and glutamate 180. One can recognise a GMPS ATP-PPase domain in the interval 205–403 (WTTETYIEET…LGLPAEIIKR (199 aa)). 232 to 238 (SGGVDSS) is a binding site for ATP.

In terms of assembly, homodimer.

It carries out the reaction XMP + L-glutamine + ATP + H2O = GMP + L-glutamate + AMP + diphosphate + 2 H(+). Its pathway is purine metabolism; GMP biosynthesis; GMP from XMP (L-Gln route): step 1/1. Functionally, catalyzes the synthesis of GMP from XMP. The chain is GMP synthase [glutamine-hydrolyzing] from Prochlorococcus marinus (strain MIT 9215).